The following is a 510-amino-acid chain: UDP-N-acetylmuramoylalanine--D-glutamate ligase (510 aa).

138–144 (GTNGKTT) contributes to the ATP binding site. Positions 294-316 (FDEPAPAPRRKKDAPPPTRAGGR) are disordered.

The protein belongs to the MurCDEF family.

The protein resides in the cytoplasm. The enzyme catalyses UDP-N-acetyl-alpha-D-muramoyl-L-alanine + D-glutamate + ATP = UDP-N-acetyl-alpha-D-muramoyl-L-alanyl-D-glutamate + ADP + phosphate + H(+). The protein operates within cell wall biogenesis; peptidoglycan biosynthesis. Functionally, cell wall formation. Catalyzes the addition of glutamate to the nucleotide precursor UDP-N-acetylmuramoyl-L-alanine (UMA). The polypeptide is UDP-N-acetylmuramoylalanine--D-glutamate ligase (Bordetella bronchiseptica (strain ATCC BAA-588 / NCTC 13252 / RB50) (Alcaligenes bronchisepticus)).